Consider the following 389-residue polypeptide: Chitinase-3-like protein 1 (389 aa).

The N-terminal stretch at 1-29 is a signal peptide; that stretch reads MHTSTEARMGMRAALTGFAVLMLLQSCSA. In terms of domain architecture, GH18 spans 30–389; it reads YKLVCYFTSW…LTNAIKDALA (360 aa). C34 and C59 are disulfide-bonded. An N-linked (GlcNAc...) asparagine glycan is attached at N68. Chitin is bound by residues 79-80, 106-109, Y150, and 213-216; these read EW, GGWK, and MTYD. Residues C309 and C372 are joined by a disulfide bond. Positions 333–347 are important for AKT1 activation and IL8 production; it reads QWVGYEDKESVKNKV. A chitin-binding site is contributed by W361.

This sequence belongs to the glycosyl hydrolase 18 family. As to quaternary structure, monomer. In terms of tissue distribution, detected in lung in pulmonary macrophages and alveolar type 2 cells and in bronchoalveolar lavage (BAL) fluids. Expressed in mammary tumor cells (at protein level). Expressed in lung. Not detected in non-inflammatory colon.

It localises to the secreted. It is found in the extracellular space. The protein resides in the cytoplasm. Its subcellular location is the endoplasmic reticulum. Functionally, carbohydrate-binding lectin with a preference for chitin. Has no chitinase activity. May play a role in tissue remodeling and in the capacity of cells to respond to and cope with changes in their environment. Plays a role in T-helper cell type 2 (Th2) inflammatory response and IL-13-induced inflammation, regulating allergen sensitization, inflammatory cell apoptosis, dendritic cell accumulation and M2 macrophage differentiation. Facilitates invasion of pathogenic enteric bacteria into colonic mucosa and lymphoid organs. Mediates activation of AKT1 signaling pathway and subsequent IL8 production in colonic epithelial cells. Regulates antibacterial responses in lung by contributing to macrophage bacterial killing, controlling bacterial dissemination and augmenting host tolerance. Also regulates hyperoxia-induced injury, inflammation and epithelial apoptosis in lung. In Mus musculus (Mouse), this protein is Chitinase-3-like protein 1 (Chi3l1).